The following is a 195-amino-acid chain: Putative L(+)-tartrate dehydratase subunit beta (195 aa).

His36 is a catalytic residue. Lys104 is a substrate binding site.

The protein belongs to the class-I fumarase family. As to quaternary structure, heterotetramer of two alpha and two beta subunits.

It carries out the reaction (2R,3R)-tartrate = oxaloacetate + H2O. In Methanocaldococcus jannaschii (strain ATCC 43067 / DSM 2661 / JAL-1 / JCM 10045 / NBRC 100440) (Methanococcus jannaschii), this protein is Putative L(+)-tartrate dehydratase subunit beta.